Consider the following 243-residue polypeptide: Carboxy-S-adenosyl-L-methionine synthase (243 aa).

Residues Tyr-35, 68-70, 92-93, and Arg-199 contribute to the S-adenosyl-L-methionine site; these read GCS and DN.

This sequence belongs to the class I-like SAM-binding methyltransferase superfamily. Cx-SAM synthase family. As to quaternary structure, homodimer.

It catalyses the reaction prephenate + S-adenosyl-L-methionine = carboxy-S-adenosyl-L-methionine + 3-phenylpyruvate + H2O. In terms of biological role, catalyzes the conversion of S-adenosyl-L-methionine (SAM) to carboxy-S-adenosyl-L-methionine (Cx-SAM). This chain is Carboxy-S-adenosyl-L-methionine synthase, found in Helicobacter pylori (strain ATCC 700392 / 26695) (Campylobacter pylori).